The following is a 205-amino-acid chain: Holliday junction branch migration complex subunit RuvA (205 aa).

The interval 1–65 is domain I; sequence MIAKLKGILD…EDRIHLFGFL (65 aa). The interval 66 to 144 is domain II; sequence DNTEKVAFNM…NINTIANNTS (79 aa). The segment at 145–153 is flexible linker; that stretch reads LATLSTDSN. The domain III stretch occupies residues 154 to 205; it reads THDNILSDAITALIALGISRAEATQILSDIYALSPSISVNELVRTALQRRAK.

It belongs to the RuvA family. As to quaternary structure, homotetramer. Forms an RuvA(8)-RuvB(12)-Holliday junction (HJ) complex. HJ DNA is sandwiched between 2 RuvA tetramers; dsDNA enters through RuvA and exits via RuvB. An RuvB hexamer assembles on each DNA strand where it exits the tetramer. Each RuvB hexamer is contacted by two RuvA subunits (via domain III) on 2 adjacent RuvB subunits; this complex drives branch migration. In the full resolvosome a probable DNA-RuvA(4)-RuvB(12)-RuvC(2) complex forms which resolves the HJ.

It is found in the cytoplasm. The RuvA-RuvB-RuvC complex processes Holliday junction (HJ) DNA during genetic recombination and DNA repair, while the RuvA-RuvB complex plays an important role in the rescue of blocked DNA replication forks via replication fork reversal (RFR). RuvA specifically binds to HJ cruciform DNA, conferring on it an open structure. The RuvB hexamer acts as an ATP-dependent pump, pulling dsDNA into and through the RuvAB complex. HJ branch migration allows RuvC to scan DNA until it finds its consensus sequence, where it cleaves and resolves the cruciform DNA. The polypeptide is Holliday junction branch migration complex subunit RuvA (Orientia tsutsugamushi (strain Ikeda) (Rickettsia tsutsugamushi)).